The primary structure comprises 507 residues: Pre-glycoprotein polyprotein GP complex (507 aa).

Gly-2 is lipidated: N-myristoyl glycine; by host. Topologically, residues 2-17 (GQVVTFLQSLPEVINE) are extracellular. Residues 18 to 33 (AINIALIAISIICILK) form a helical membrane-spanning segment. Residues 34 to 58 (GLVNFWKCGVVQLAIFLCLAGRKCD) lie on the Cytoplasmic side of the membrane. Cys-57 is a binding site for Zn(2+). The Extracellular segment spans residues 59-445 (GLMIDRRHEL…QGKTPIALTD (387 aa)). Cystine bridges form between Cys-86–Cys-247, Cys-292–Cys-305, Cys-314–Cys-323, and Cys-377–Cys-398. N-linked (GlcNAc...) asparagine; by host glycosylation is found at Asn-89, Asn-111, Asn-179, and Asn-240. Asn-378, Asn-386, Asn-403, and Asn-408 each carry an N-linked (GlcNAc...) asparagine; by host glycan. A helical membrane pass occupies residues 446–466 (ICFWSLVFFTSTVFLQLVGIP). The Cytoplasmic segment spans residues 467–507 (THRHLVGEGCPKPHRITSNSLCACGYYKIPKRPTRWVRKGK). Residues His-468, His-470, Cys-476, His-480, Cys-488, and Cys-490 each contribute to the Zn(2+) site.

This sequence belongs to the arenaviridae GPC protein family. As to quaternary structure, interacts with glycoprotein G2. Part of the GP complex (GP-C) together with glycoprotein G1 and glycoprotein G2. The GP-complex interacts with protein Z, which interacts with ribonucleocapsid; these interactions may induce virion budding. In terms of assembly, homotrimer; disulfide-linked. In pre-fusion state, G1 homotrimers bind G2 homotrimers via ionic interactions. Part of the GP complex (GP-C) together with glycoprotein G2 and the stable signal peptide. The GP-complex interacts with protein Z, which interacts with ribonucleocapsid; these interactions may induce virion budding. Homotrimer. Interacts with the stable signal peptide. In pre-fusion state, G2 homotrimers bind G1 homotrimers via ionic interactions. Part of the GP complex (GP-C) together with glycoprotein G1 and the stable signal peptide. Acidification in the endosome triggers rearrangements, which ultimately leads to a 6 helix bundle formed by the two heptad repeat domains (HR1 and HR2) in post-fusion state. The GP-complex interacts with protein Z, which interacts with ribonucleocapsid; these interactions may induce virion budding. Specific enzymatic cleavages in vivo yield mature proteins. GP-C polyprotein is cleaved in the endoplasmic reticulum by the host protease MBTPS1. Only cleaved glycoprotein is incorporated into virions. Post-translationally, the SSP remains stably associated with the GP complex following cleavage by signal peptidase and plays crucial roles in the trafficking of GP through the secretory pathway. In terms of processing, myristoylation is necessary for GP2-mediated fusion activity.

It localises to the virion membrane. The protein localises to the host endoplasmic reticulum membrane. The protein resides in the host Golgi apparatus membrane. Its subcellular location is the host cell membrane. Functions as a cleaved signal peptide that is retained as the third component of the GP complex (GP-C). Helps to stabilize the spike complex in its native conformation. The SSP is required for efficient glycoprotein expression, post-translational maturation cleavage of G1 and G2, glycoprotein transport to the cell surface plasma membrane, formation of infectious virus particles, and acid pH-dependent glycoprotein-mediated cell fusion. In terms of biological role, forms the virion spikes together with glycoprotein G2. The glycoprotein spike trimers are connected to the underlying matrix. Interacts with the host receptor leading to virus endocytosis. Functionally, forms the virion spikes together with glycoprotein G1. The glycoprotein spike trimers are connected to the underlying matrix. Class I viral fusion protein that directs fusion of viral and host endosomal membranes, leading to delivery of the nucleocapsid into the cytoplasm. Membrane fusion is mediated by irreversible conformational changes induced by acidification. In Allpahuayo mammarenavirus (isolate Rat/Peru/CLHP-2472/1997) (ALLV), this protein is Pre-glycoprotein polyprotein GP complex.